A 452-amino-acid polypeptide reads, in one-letter code: Packaging protein 1 (452 aa).

The disordered stretch occupies residues 1 to 78; sequence MLPCRSTGRR…AKPPQRGSLL (78 aa). Residue 173–180 coordinates ATP; that stretch reads GPTGCGKS. The tract at residues 442-452 is DNA-binding; that stretch reads RAYHVRKNKYQ.

It belongs to the adenoviridae packaging protein 1 family. Homodimer. Part of a genome packaging complex composed of packaging proteins 1, 2 and 3; this complex specifically binds to the packaging sequence on the left end of viral genomic DNA and performs packaging of the viral genome. Interacts with protein 33K.

It localises to the virion. The protein localises to the host nucleus. Its subcellular location is the host nucleoplasm. It is found in the host nucleolus. Functionally, component of the packaging machinery which encapsidates the viral DNA into preformed capsids and transcriptional activator of the viral major late promoter (MLP). Binds, along with packaging proteins 2 and 3, to the specific packaging sequence on the left end of viral genomic DNA and displays ATPase activity thereby providing the power stroke of the packaging machinery. The activity of packaging protein IVa2 is stimulated by protein 33K which acts as a terminase. May be the protein that pumps DNA into the capsid powered by ATP hydrolysis. Specifically binds to the 5'-CG-3' nucleotides of the repeats making up the packaging sequence. Component of the DEF-A and DEF-B transcription factors that bind downstream elements of the major late promoter (MLP), and stimulate transcription from the MLP after initiation of viral DNA replication. DEF-A is a heterodimer packaging proteins 1 and 2 and DEF-B is a homodimer of packaging protein 1. This chain is Packaging protein 1, found in Homo sapiens (Human).